A 177-amino-acid chain; its full sequence is Inorganic pyrophosphatase (177 aa).

Positions 29, 43, and 55 each coordinate substrate. Positions 65, 70, and 102 each coordinate Mg(2+). Tyrosine 141 provides a ligand contact to substrate.

The protein belongs to the PPase family. Homohexamer. Requires Mg(2+) as cofactor.

It is found in the cytoplasm. It catalyses the reaction diphosphate + H2O = 2 phosphate + H(+). Functionally, catalyzes the hydrolysis of inorganic pyrophosphate (PPi) forming two phosphate ions. The chain is Inorganic pyrophosphatase from Aquifex pyrophilus.